Consider the following 116-residue polypeptide: Iron-sulfur cluster assembly protein CyaY (116 aa).

This sequence belongs to the frataxin family.

Involved in iron-sulfur (Fe-S) cluster assembly. May act as a regulator of Fe-S biogenesis. This chain is Iron-sulfur cluster assembly protein CyaY, found in Buchnera aphidicola subsp. Acyrthosiphon pisum (strain APS) (Acyrthosiphon pisum symbiotic bacterium).